The sequence spans 376 residues: Succinyl-diaminopimelate desuccinylase (376 aa).

Residue His-64 coordinates Zn(2+). Asp-66 is a catalytic residue. Residue Asp-97 coordinates Zn(2+). Glu-131 (proton acceptor) is an active-site residue. Zn(2+)-binding residues include Glu-132, Glu-160, and His-347.

It belongs to the peptidase M20A family. DapE subfamily. As to quaternary structure, homodimer. Zn(2+) serves as cofactor. The cofactor is Co(2+).

The catalysed reaction is N-succinyl-(2S,6S)-2,6-diaminopimelate + H2O = (2S,6S)-2,6-diaminopimelate + succinate. It participates in amino-acid biosynthesis; L-lysine biosynthesis via DAP pathway; LL-2,6-diaminopimelate from (S)-tetrahydrodipicolinate (succinylase route): step 3/3. Its function is as follows. Catalyzes the hydrolysis of N-succinyl-L,L-diaminopimelic acid (SDAP), forming succinate and LL-2,6-diaminopimelate (DAP), an intermediate involved in the bacterial biosynthesis of lysine and meso-diaminopimelic acid, an essential component of bacterial cell walls. This is Succinyl-diaminopimelate desuccinylase from Wigglesworthia glossinidia brevipalpis.